A 776-amino-acid chain; its full sequence is Intermediate filament protein ifp-1 (776 aa).

A head region spans residues 1–23; it reads MDSANARDCLLHLARAKLSERQD. The region spanning 20-371 is the IF rod domain; it reads ERQDLVQLND…ELLDRSGDPR (352 aa). Positions 24–55 are coil 1A; it reads LVQLNDQFVDIIEHVHYMEAEHTALEHDYNLL. The segment at 56-69 is linker 1; the sequence is KSGVQSDSSGINEI. Positions 70–207 are coil 1B; the sequence is YNVEIRTVRS…EDNKKIIMNE (138 aa). The interval 208-224 is linker 12; sequence HKYFVRDRNADRHVFRD. The coil 2 stretch occupies residues 225–620; that stretch reads QLRKAIADIR…QRGPHHSSYH (396 aa). Disordered regions lie at residues 453–473 and 518–544; these read ASPI…DSRS and NTTQ…SERR. Polar residues predominate over residues 518–536; sequence NTTQINNPYASRTPTSSVN. The tract at residues 621 to 768 is tail; it reads AATGSVSNSI…WFVYTSNTEI (148 aa). Residues 653–764 form the LTD domain; it reads NFQRFTRWYK…EVKSWFVYTS (112 aa).

The protein belongs to the intermediate filament family.

The protein localises to the cytoplasm. In terms of biological role, cytoplasmic intermediate filaments provide mechanical strength to cells. Not essential protein. This Caenorhabditis elegans protein is Intermediate filament protein ifp-1 (ifp-1).